Reading from the N-terminus, the 133-residue chain is MVKNQAQAKKSVKRKQLKNIPSGVVHVKATFNNTIVSITDPAGNVISWASAGKVGYSGSRKSSAFAATVAAQDAAKTAMNSGLKEVEVCLKGTGAGRESAVRALISAGLVVSVIRDETPVPHNGCRPRKRRRV.

It belongs to the universal ribosomal protein uS11 family. Part of the 30S ribosomal subunit. Interacts with proteins S7 and S18. Binds to IF-3.

In terms of biological role, located on the platform of the 30S subunit, it bridges several disparate RNA helices of the 16S rRNA. Forms part of the Shine-Dalgarno cleft in the 70S ribosome. In Chlamydia pneumoniae (Chlamydophila pneumoniae), this protein is Small ribosomal subunit protein uS11.